Consider the following 417-residue polypeptide: Actin-like protein 7B (417 aa).

Residues Met1–Gln39 form a disordered region. Ser8 carries the post-translational modification Phosphoserine.

The protein belongs to the actin family.

The protein resides in the cytoplasm. It localises to the cytoskeleton. This Rattus norvegicus (Rat) protein is Actin-like protein 7B (Actl7b).